Consider the following 777-residue polypeptide: Zinc finger protein 786 (777 aa).

The 72-residue stretch at 9-80 (LTFEDVAIYF…WGEKKKPDKE (72 aa)) folds into the KRAB domain. The C2H2-type 1; degenerate zinc finger occupies 194-216 (NSCPVCRENSWEKNHLVKQQKGH). A C2H2-type 2 zinc finger spans residues 240–262 (ISCLGCGKSFRLKQYLVRHLDIH). Residues 268–291 (PQCPKCKMCFHHERTLFSHHLKNS) form a C2H2-type 3; degenerate zinc finger. The segment at 420–442 (VFCRKCGQGFTKHCGLTEHTRIL) adopts a C2H2-type 4; degenerate zinc-finger fold. C2H2-type zinc fingers lie at residues 448–470 (FWCA…QRLH), 476–498 (FQCT…QLQH), 504–526 (FSCS…LRVH), 532–554 (FQCP…QRIH), 560–582 (FSCG…FRVH), 588–610 (FQCP…QRLH), 616–638 (FQCP…QLLH), 644–665 (FSCQ…MRTH), 671–693 (FQCP…QGLH), 699–721 (FHCP…QRIH), and 727–749 (FACG…IRVH).

The protein belongs to the krueppel C2H2-type zinc-finger protein family.

It is found in the nucleus. Functionally, may be involved in transcriptional regulation. This chain is Zinc finger protein 786 (Znf786), found in Mus musculus (Mouse).